Here is a 214-residue protein sequence, read N- to C-terminus: tRNA (guanine-N(7)-)-methyltransferase (214 aa).

The S-adenosyl-L-methionine site is built by Glu-43, Glu-68, Asp-95, and Asp-117. The active site involves Asp-117. Residues Lys-121, Asp-153, and 190 to 193 (TEYE) contribute to the substrate site.

This sequence belongs to the class I-like SAM-binding methyltransferase superfamily. TrmB family.

It catalyses the reaction guanosine(46) in tRNA + S-adenosyl-L-methionine = N(7)-methylguanosine(46) in tRNA + S-adenosyl-L-homocysteine. Its pathway is tRNA modification; N(7)-methylguanine-tRNA biosynthesis. Its function is as follows. Catalyzes the formation of N(7)-methylguanine at position 46 (m7G46) in tRNA. The chain is tRNA (guanine-N(7)-)-methyltransferase from Staphylococcus aureus (strain Mu3 / ATCC 700698).